The primary structure comprises 373 residues: Packaging protein 3 (373 aa).

Residues methionine 1–proline 32 are disordered. An interaction with packaging protein 1 region spans residues methionine 1–serine 150. Phosphoserine; by host occurs at positions 52 and 334.

The protein belongs to the adenoviridae packaging protein 3 family. Part of the genome packaging complex composed of packaging proteins 1, 2 and 3; this complex specifically binds to the packaging sequence on the left end of viral genomic DNA and performs packaging of the viral genome. Interacts with hexon-linking protein IIIa; this interaction is required to promote correct genome packaging. In terms of processing, cleaved at different sites by the viral protease during virion maturation.

The protein resides in the host nucleus. Functionally, involved in viral genome packaging through its interaction with packaging proteins 1 and 2. After proteolytic cleavage by adenovirus protease, L1 52/55k protein is removed from the capsid during viral maturation. This Homo sapiens (Human) protein is Packaging protein 3.